The following is a 300-amino-acid chain: NAD kinase (300 aa).

Aspartate 75 (proton acceptor) is an active-site residue. Residues 75 to 76 (DG), 149 to 150 (ND), arginine 177, aspartate 179, 190 to 195 (TAYALS), alanine 214, and glutamine 248 each bind NAD(+).

Belongs to the NAD kinase family. A divalent metal cation serves as cofactor.

The protein localises to the cytoplasm. The catalysed reaction is NAD(+) + ATP = ADP + NADP(+) + H(+). In terms of biological role, involved in the regulation of the intracellular balance of NAD and NADP, and is a key enzyme in the biosynthesis of NADP. Catalyzes specifically the phosphorylation on 2'-hydroxyl of the adenosine moiety of NAD to yield NADP. The polypeptide is NAD kinase (Paraburkholderia phytofirmans (strain DSM 17436 / LMG 22146 / PsJN) (Burkholderia phytofirmans)).